A 365-amino-acid polypeptide reads, in one-letter code: Carbamoyl phosphate synthase small chain (365 aa).

CPSase regions lie at residues 1 to 166 (MKRQ…PSPG) and 1 to 169 (MKRQ…GRGH). L-glutamine-binding residues include Ser45, Gly218, and Gly220. The 188-residue stretch at 170 to 357 (RVVLVDFGMK…LTMIENFKKE (188 aa)) folds into the Glutamine amidotransferase type-1 domain. Cys245 functions as the Nucleophile in the catalytic mechanism. L-glutamine is bound by residues Leu246, Gln249, Asn287, Gly289, and Tyr290. Catalysis depends on residues His330 and Glu332.

Belongs to the CarA family. Composed of two chains; the small (or glutamine) chain promotes the hydrolysis of glutamine to ammonia, which is used by the large (or ammonia) chain to synthesize carbamoyl phosphate. Tetramer of heterodimers (alpha,beta)4.

The enzyme catalyses hydrogencarbonate + L-glutamine + 2 ATP + H2O = carbamoyl phosphate + L-glutamate + 2 ADP + phosphate + 2 H(+). It carries out the reaction L-glutamine + H2O = L-glutamate + NH4(+). Its pathway is amino-acid biosynthesis; L-arginine biosynthesis; carbamoyl phosphate from bicarbonate: step 1/1. It participates in pyrimidine metabolism; UMP biosynthesis via de novo pathway; (S)-dihydroorotate from bicarbonate: step 1/3. Its function is as follows. Small subunit of the glutamine-dependent carbamoyl phosphate synthetase (CPSase). CPSase catalyzes the formation of carbamoyl phosphate from the ammonia moiety of glutamine, carbonate, and phosphate donated by ATP, constituting the first step of 2 biosynthetic pathways, one leading to arginine and/or urea and the other to pyrimidine nucleotides. The small subunit (glutamine amidotransferase) binds and cleaves glutamine to supply the large subunit with the substrate ammonia. The polypeptide is Carbamoyl phosphate synthase small chain (Bacillus cereus (strain ZK / E33L)).